The sequence spans 206 residues: Phosphoribosylglycinamide formyltransferase (206 aa).

Residue 13 to 15 (GTN) coordinates N(1)-(5-phospho-beta-D-ribosyl)glycinamide. (6R)-10-formyltetrahydrofolate is bound by residues 99-102 (MIIL) and N121. The active-site Proton donor is H123. D163 contributes to the (6R)-10-formyltetrahydrofolate binding site. E192 contacts N(1)-(5-phospho-beta-D-ribosyl)glycinamide.

It belongs to the GART family.

It catalyses the reaction N(1)-(5-phospho-beta-D-ribosyl)glycinamide + (6R)-10-formyltetrahydrofolate = N(2)-formyl-N(1)-(5-phospho-beta-D-ribosyl)glycinamide + (6S)-5,6,7,8-tetrahydrofolate + H(+). Its pathway is purine metabolism; IMP biosynthesis via de novo pathway; N(2)-formyl-N(1)-(5-phospho-D-ribosyl)glycinamide from N(1)-(5-phospho-D-ribosyl)glycinamide (10-formyl THF route): step 1/1. The protein is Phosphoribosylglycinamide formyltransferase (purN) of Dictyostelium discoideum (Social amoeba).